Reading from the N-terminus, the 1076-residue chain is Nucleoporin NUP1 (1076 aa).

Residues 1-11 (MSSNTSSVMSS) show a composition bias toward low complexity. Residues 1–39 (MSSNTSSVMSSPRVEKRSFSSTLKSFFTNPNKKRPSSKK) form a disordered region. Residue serine 2 is modified to N-acetylserine. The span at 19–30 (FSSTLKSFFTNP) shows a compositional bias: polar residues. A phosphoserine mark is found at serine 54 and serine 161. Disordered regions lie at residues 143 to 183 (SQSK…TNVG) and 224 to 260 (KKDNKDKEGNAGGDQKTSENRNNIKSSISNGNLATGP). 2 stretches are compositionally biased toward polar residues: residues 154 to 170 (LCTSSTPSPIKNGSCTR) and 243 to 260 (NRNNIKSSISNGNLATGP). An FXF 1 repeat occupies 336-338 (FDF). Threonine 381 carries the phosphothreonine modification. Serine 383 carries the post-translational modification Phosphoserine. The FXF 2 repeat unit spans residues 384–386 (FNF). Residues 403 to 518 (TTLFNFGGKS…SFVFGASDKQ (116 aa)) form a disordered region. 2 FXFG repeats span residues 406-409 (FNFG) and 422-425 (FKFG). Basic and acidic residues predominate over residues 426 to 439 (KTSEKSENHTESDA). FXFG repeat units lie at residues 448–451 (FSFG) and 484–487 (FDFG). Residues 488-505 (KTGDQKETKKGESEKDAS) are compositionally biased toward basic and acidic residues. FXFG repeat units follow at residues 510 to 513 (FVFG), 525 to 528 (FTFG), 543 to 546 (FTFG), and 571 to 574 (FTFG). A disordered region spans residues 548-743 (AATAKETHTK…SMKSTASTAA (196 aa)). FXF repeat units lie at residues 591–593 (FSF), 614–616 (FSF), 636–638 (FSF), and 657–659 (FTF). 2 stretches are compositionally biased toward polar residues: residues 634 to 649 (PTFSFTEPAQKDSSVV) and 658 to 667 (TFASSKTSQP). Serine 637 carries the phosphoserine modification. The FXFG 9 repeat unit spans residues 671-674 (FSFG). The stretch at 689–691 (FSF) is one FXF 7 repeat. 2 FXFG repeats span residues 708–711 (FTFG) and 727–730 (FSFG). A compositionally biased stretch (low complexity) spans 708-723 (FTFGGSTTNNTTTTST). The stretch at 753–755 (FSF) is one FXF 8 repeat. One copy of the FXFG 12 repeat lies at 800–803 (FSFG). FXF repeat units follow at residues 819 to 821 (FSF) and 866 to 868 (FGF). An FXFG 13 repeat occupies 885–888 (FNFG). One copy of the FXF 11 repeat lies at 929–931 (FNF). The tract at residues 940 to 979 (GGSVFNMNGNTNANTVFAGSNNQPHQSQTPSFNTNSSFTP) is disordered. Residues 944 to 964 (FNMNGNTNANTVFAGSNNQPH) are compositionally biased toward polar residues. Low complexity predominate over residues 965 to 979 (QSQTPSFNTNSSFTP). 3 FG repeats span residues 1008–1009 (FG), 1027–1028 (FG), and 1038–1039 (FG). The interval 1025–1054 (SIFGGAGGVPTTSFGQPQSAPNQMGMGTNN) is disordered. The span at 1034–1045 (PTTSFGQPQSAP) shows a compositional bias: polar residues. The interval 1040-1076 (QPQSAPNQMGMGTNNGMSMGGGVMANRKIARMRHSKR) is interaction with KAP95.

In terms of assembly, component of the nuclear pore complex (NPC). NPC constitutes the exclusive means of nucleocytoplasmic transport. NPCs allow the passive diffusion of ions and small molecules and the active, nuclear transport receptor-mediated bidirectional transport of macromolecules such as proteins, RNAs, ribonucleoparticles (RNPs), and ribosomal subunits across the nuclear envelope. Due to its 8-fold rotational symmetry, all subunits are present with 8 copies or multiples thereof. Interacts through its FG repeats with nuclear transport receptors. Binds to the nuclear basket of the NPC through NUP60. Interacts with KAP122. Phosphorylated by CDC28.

It is found in the nucleus. It localises to the nuclear pore complex. The protein resides in the nucleus membrane. Functionally, functions as a component of the nuclear pore complex (NPC). NPC components, collectively referred to as nucleoporins (NUPs), can play the role of both NPC structural components and of docking or interaction partners for transiently associated nuclear transport factors. Active directional transport is assured by both, a Phe-Gly (FG) repeat affinity gradient for these transport factors across the NPC and a transport cofactor concentration gradient across the nuclear envelope (GSP1 and GSP2 GTPases associated predominantly with GTP in the nucleus, with GDP in the cytoplasm). As one of the FG repeat nucleoporins NUP1 is involved in interactions with and guidance of nuclear transport receptors such as SRP1-KAP95 (importin alpha and beta) through the NPC. Like the closely related NUP2 it also plays an important role in disassembling and recycling SRP1-KAP95 to the cytoplasm after nuclear import. Upon entry of the heterotrimeric SRP1-KAP95-cargo complex in the nucleus, NUP1 binds through its C-terminus to KAP95, thus accelerating the release of KAP95 and, indirectly, of the nuclear localization signal (NLS)-containing cargo from the SRP1-KAP95-cargo complex. This is Nucleoporin NUP1 (NUP1) from Saccharomyces cerevisiae (strain ATCC 204508 / S288c) (Baker's yeast).